The chain runs to 377 residues: Chaperone protein DnaJ (377 aa).

Residues 5–70 enclose the J domain; it reads DYYQVLGVSR…KKRSAYDQLG (66 aa). The CR-type zinc finger occupies 138–216; the sequence is GVTKIISFKT…CYGEGRYINT (79 aa). 8 residues coordinate Zn(2+): C151, C154, C168, C171, C190, C193, C204, and C207. CXXCXGXG motif repeat units follow at residues 151–158, 168–175, 190–197, and 204–211; these read CEACTGKG, CPTCRGSG, CQTCRGAG, and CTKCYGEG.

This sequence belongs to the DnaJ family. Homodimer. The cofactor is Zn(2+).

Its subcellular location is the cytoplasm. Participates actively in the response to hyperosmotic and heat shock by preventing the aggregation of stress-denatured proteins and by disaggregating proteins, also in an autonomous, DnaK-independent fashion. Unfolded proteins bind initially to DnaJ; upon interaction with the DnaJ-bound protein, DnaK hydrolyzes its bound ATP, resulting in the formation of a stable complex. GrpE releases ADP from DnaK; ATP binding to DnaK triggers the release of the substrate protein, thus completing the reaction cycle. Several rounds of ATP-dependent interactions between DnaJ, DnaK and GrpE are required for fully efficient folding. Also involved, together with DnaK and GrpE, in the DNA replication of plasmids through activation of initiation proteins. This is Chaperone protein DnaJ from Orientia tsutsugamushi (strain Ikeda) (Rickettsia tsutsugamushi).